The chain runs to 150 residues: UPF0260 protein PP_4587 (150 aa).

It belongs to the UPF0260 family.

This is UPF0260 protein PP_4587 from Pseudomonas putida (strain ATCC 47054 / DSM 6125 / CFBP 8728 / NCIMB 11950 / KT2440).